A 260-amino-acid polypeptide reads, in one-letter code: ARL14 effector protein (260 aa).

Met-1 carries the post-translational modification N-acetylmethionine. Residue Lys-177 forms a Glycyl lysine isopeptide (Lys-Gly) (interchain with G-Cter in SUMO2) linkage. Phosphoserine is present on Ser-183.

As to quaternary structure, interacts with ARL14 and MYO1E.

It localises to the cytoplasm. Functionally, through its interaction with ARL14 and MYO1E, may connect MHC class II-containing cytoplasmic vesicles to the actin network and hence controls the movement of these vesicles along the actin cytoskeleton in dendritic cells. The protein is ARL14 effector protein (ARL14EP) of Bos taurus (Bovine).